We begin with the raw amino-acid sequence, 326 residues long: UDP-3-O-acylglucosamine N-acyltransferase (326 aa).

Residue His-225 is the Proton acceptor of the active site.

It belongs to the transferase hexapeptide repeat family. LpxD subfamily. As to quaternary structure, homotrimer.

The catalysed reaction is a UDP-3-O-[(3R)-3-hydroxyacyl]-alpha-D-glucosamine + a (3R)-hydroxyacyl-[ACP] = a UDP-2-N,3-O-bis[(3R)-3-hydroxyacyl]-alpha-D-glucosamine + holo-[ACP] + H(+). It participates in bacterial outer membrane biogenesis; LPS lipid A biosynthesis. In terms of biological role, catalyzes the N-acylation of UDP-3-O-acylglucosamine using 3-hydroxyacyl-ACP as the acyl donor. Is involved in the biosynthesis of lipid A, a phosphorylated glycolipid that anchors the lipopolysaccharide to the outer membrane of the cell. This is UDP-3-O-acylglucosamine N-acyltransferase from Verminephrobacter eiseniae (strain EF01-2).